The following is a 126-amino-acid chain: Histone H2B type 1-B (126 aa).

Residues 1 to 12 are compositionally biased toward low complexity; the sequence is MPEPSKSAPAPK. The interval 1 to 35 is disordered; it reads MPEPSKSAPAPKKGSKKAITKAQKKDGKKRKRSRK. Pro2 is subject to N-acetylproline. Glu3 is modified (ADP-ribosyl glutamic acid). Residue Lys6 is modified to N6-(2-hydroxyisobutyryl)lysine; alternate. At Lys6 the chain carries N6-(beta-hydroxybutyryl)lysine; alternate. Lys6 bears the N6-acetyllysine; alternate mark. An N6-butyryllysine; alternate modification is found at Lys6. At Lys6 the chain carries N6-crotonyllysine; alternate. At Lys6 the chain carries N6-lactoyllysine; alternate. Residue Lys6 forms a Glycyl lysine isopeptide (Lys-Gly) (interchain with G-Cter in SUMO2); alternate linkage. Position 7 is an ADP-ribosylserine (Ser7). Lys12 carries the N6-(beta-hydroxybutyryl)lysine; alternate modification. N6-acetyllysine; alternate is present on residues Lys12 and Lys13. N6-crotonyllysine; alternate is present on residues Lys12 and Lys13. Residue Lys12 is modified to N6-lactoyllysine; alternate. Lys13 carries the post-translational modification N6-(2-hydroxyisobutyryl)lysine; alternate. Ser15 carries the phosphoserine; by STK4/MST1 modification. N6-acetyllysine; alternate is present on residues Lys16, Lys17, Lys21, and Lys24. Residues Lys16, Lys17, Lys21, and Lys24 each carry the N6-crotonyllysine; alternate modification. 4 positions are modified to N6-lactoyllysine; alternate: Lys16, Lys17, Lys21, and Lys24. Residues Lys17 and Lys21 each carry the N6-(beta-hydroxybutyryl)lysine; alternate modification. Residue Lys17 is modified to N6-glutaryllysine; alternate. N6-(2-hydroxyisobutyryl)lysine; alternate occurs at positions 21 and 24. Lys21 carries the post-translational modification N6-butyryllysine; alternate. Residue Lys21 forms a Glycyl lysine isopeptide (Lys-Gly) (interchain with G-Cter in SUMO2); alternate linkage. Lys25 bears the N6-(2-hydroxyisobutyryl)lysine mark. Lys35 carries the N6-(2-hydroxyisobutyryl)lysine; alternate modification. N6-(beta-hydroxybutyryl)lysine; alternate is present on Lys35. Residue Lys35 is modified to N6-crotonyllysine; alternate. Residue Lys35 is modified to N6-glutaryllysine; alternate. The residue at position 35 (Lys35) is an N6-succinyllysine; alternate. A Glycyl lysine isopeptide (Lys-Gly) (interchain with G-Cter in ubiquitin); alternate cross-link involves residue Lys35. Position 36 is a polyADP-ribosyl glutamic acid (Glu36). Phosphoserine; by AMPK is present on Ser37. An N6-(2-hydroxyisobutyryl)lysine; alternate mark is found at Lys44, Lys47, and Lys58. Position 44 is an N6-lactoyllysine; alternate (Lys44). N6-glutaryllysine; alternate occurs at positions 44 and 47. Position 47 is an N6-methyllysine; alternate (Lys47). Lys58 is modified (N6,N6-dimethyllysine; alternate). Arg80 carries the post-translational modification Dimethylated arginine. Lys86 carries the post-translational modification N6-(2-hydroxyisobutyryl)lysine; alternate. Residue Lys86 is modified to N6-(beta-hydroxybutyryl)lysine; alternate. The residue at position 86 (Lys86) is an N6-acetyllysine; alternate. Residue Lys86 is modified to N6-lactoyllysine; alternate. Lys86 is modified (N6,N6,N6-trimethyllysine; alternate). An omega-N-methylarginine mark is found at Arg87 and Arg93. At Lys109 the chain carries N6-(2-hydroxyisobutyryl)lysine; alternate. N6-lactoyllysine; alternate is present on Lys109. Lys109 is subject to N6-glutaryllysine; alternate. Lys109 bears the N6-methyllysine; alternate mark. Ser113 carries an O-linked (GlcNAc) serine glycan. Thr116 is modified (phosphothreonine). 2 positions are modified to N6-(2-hydroxyisobutyryl)lysine; alternate: Lys117 and Lys121. Lys117 and Lys121 each carry N6-(beta-hydroxybutyryl)lysine; alternate. N6-lactoyllysine; alternate is present on residues Lys117 and Lys121. Residues Lys117 and Lys121 each carry the N6-glutaryllysine; alternate modification. Residues Lys117 and Lys121 each carry the N6-succinyllysine; alternate modification. Lys117 carries the N6-malonyllysine; alternate modification. The residue at position 117 (Lys117) is an N6-methylated lysine; alternate. Residue Lys121 forms a Glycyl lysine isopeptide (Lys-Gly) (interchain with G-Cter in ubiquitin); alternate linkage.

Belongs to the histone H2B family. The nucleosome is a histone octamer containing two molecules each of H2A, H2B, H3 and H4 assembled in one H3-H4 heterotetramer and two H2A-H2B heterodimers. The octamer wraps approximately 147 bp of DNA. In terms of processing, monoubiquitination at Lys-35 (H2BK34Ub) by the MSL1/MSL2 dimer is required for histone H3 'Lys-4' (H3K4me) and 'Lys-79' (H3K79me) methylation and transcription activation at specific gene loci, such as HOXA9 and MEIS1 loci. Similarly, monoubiquitination at Lys-121 (H2BK120Ub) by the RNF20/40 complex gives a specific tag for epigenetic transcriptional activation and is also prerequisite for histone H3 'Lys-4' and 'Lys-79' methylation. It also functions cooperatively with the FACT dimer to stimulate elongation by RNA polymerase II. H2BK120Ub also acts as a regulator of mRNA splicing: deubiquitination by USP49 is required for efficient cotranscriptional splicing of a large set of exons. Phosphorylation at Ser-37 (H2BS36ph) by AMPK in response to stress promotes transcription. Phosphorylated on Ser-15 (H2BS14ph) by STK4/MST1 during apoptosis; which facilitates apoptotic chromatin condensation. Also phosphorylated on Ser-15 in response to DNA double strand breaks (DSBs), and in correlation with somatic hypermutation and immunoglobulin class-switch recombination. Post-translationally, glcNAcylation at Ser-113 promotes monoubiquitination of Lys-121. It fluctuates in response to extracellular glucose, and associates with transcribed genes. In terms of processing, ADP-ribosylated by PARP1 or PARP2 on Ser-7 (H2BS6ADPr) in response to DNA damage. H2BS6ADPr promotes recruitment of CHD1L. Mono-ADP-ribosylated on Glu-3 (H2BE2ADPr) by PARP3 in response to single-strand breaks. Poly ADP-ribosylation on Glu-36 (H2BE35ADPr) by PARP1 regulates adipogenesis: it inhibits phosphorylation at Ser-37 (H2BS36ph), thereby blocking expression of pro-adipogenetic genes. Crotonylation (Kcr) is specifically present in male germ cells and marks testis-specific genes in post-meiotic cells, including X-linked genes that escape sex chromosome inactivation in haploid cells. Crotonylation marks active promoters and enhancers and confers resistance to transcriptional repressors. It is also associated with post-meiotically activated genes on autosomes. Post-translationally, lactylated in macrophages by EP300/P300 by using lactoyl-CoA directly derived from endogenous or exogenous lactate, leading to stimulates gene transcription.

The protein localises to the nucleus. The protein resides in the chromosome. Core component of nucleosome. Nucleosomes wrap and compact DNA into chromatin, limiting DNA accessibility to the cellular machineries which require DNA as a template. Histones thereby play a central role in transcription regulation, DNA repair, DNA replication and chromosomal stability. DNA accessibility is regulated via a complex set of post-translational modifications of histones, also called histone code, and nucleosome remodeling. The polypeptide is Histone H2B type 1-B (Homo sapiens (Human)).